The sequence spans 512 residues: 2,3-bisphosphoglycerate-independent phosphoglycerate mutase (512 aa).

Residues Asp12 and Ser62 each coordinate Mn(2+). Catalysis depends on Ser62, which acts as the Phosphoserine intermediate. Substrate-binding positions include His123, 153–154, Arg185, Arg191, 260–263, and Lys333; these read RD and RPDR. Mn(2+) contacts are provided by Asp400, His404, Asp441, His442, and His460.

This sequence belongs to the BPG-independent phosphoglycerate mutase family. Monomer. Mn(2+) serves as cofactor.

The enzyme catalyses (2R)-2-phosphoglycerate = (2R)-3-phosphoglycerate. The protein operates within carbohydrate degradation; glycolysis; pyruvate from D-glyceraldehyde 3-phosphate: step 3/5. Its function is as follows. Catalyzes the interconversion of 2-phosphoglycerate and 3-phosphoglycerate. This Clostridium perfringens (strain 13 / Type A) protein is 2,3-bisphosphoglycerate-independent phosphoglycerate mutase.